A 381-amino-acid chain; its full sequence is tRNA-cytidine(32) 2-sulfurtransferase (381 aa).

Positions 101–106 (SGGKDS) match the PP-loop motif motif. [4Fe-4S] cluster contacts are provided by Cys-176, Cys-179, and Cys-267.

The protein belongs to the TtcA family. Homodimer. Mg(2+) is required as a cofactor. Requires [4Fe-4S] cluster as cofactor.

The protein localises to the cytoplasm. The catalysed reaction is cytidine(32) in tRNA + S-sulfanyl-L-cysteinyl-[cysteine desulfurase] + AH2 + ATP = 2-thiocytidine(32) in tRNA + L-cysteinyl-[cysteine desulfurase] + A + AMP + diphosphate + H(+). Its pathway is tRNA modification. In terms of biological role, catalyzes the ATP-dependent 2-thiolation of cytidine in position 32 of tRNA, to form 2-thiocytidine (s(2)C32). The sulfur atoms are provided by the cysteine/cysteine desulfurase (IscS) system. The chain is tRNA-cytidine(32) 2-sulfurtransferase from Psychrobacter arcticus (strain DSM 17307 / VKM B-2377 / 273-4).